An 81-amino-acid polypeptide reads, in one-letter code: Putative defensin-like protein 52 (81 aa).

The first 20 residues, 1-20 (MTFFLVIILAISSSNYNVLA), serve as a signal peptide directing secretion. Disulfide bonds link cysteine 31/cysteine 55 and cysteine 41/cysteine 64.

Belongs to the DEFL family.

Its subcellular location is the secreted. This is Putative defensin-like protein 52 from Arabidopsis thaliana (Mouse-ear cress).